The following is a 455-amino-acid chain: MSQRKYFGTDGIRGHVGLSNINPEFVLKLGWAVGCVLANGARKKVVIGKDTRVSGYMLESALEAGLSAAGVDVALLGPMPTPGIAYLTQTLRANAGIVISASHNLFEDNGIKFFSADGGKLPDSVELAIEAQLEKQLQTVPSVKLGKATRINDAAGRYIEFCKSTIPSLSRLSNLKIVVDCANGATYHIAPNVFSELGADVVPIGIKPDGFNINQECGSTAPELLREKVIAVGADIGIGLDGDGDRVILVDSLGNLVDGDQIIYIIAKDRHQRGVLHGGVVGTLMSNYGLELAITSLGVPFQRSKVGDRYVLETLREKDWKIGGETSGHIVCLDKTTTGDGIVAALQVLSIMVKQNKALHELTAGIQLLPQTLVNLKTNNAALLASNPDVIQAVKNLEKHLNGEGRVLLRPSGTEPLLRVMVEGANASIVKQQAQMLCDDISQIDKKLTESLPST.

S102 serves as the catalytic Phosphoserine intermediate. Positions 102, 241, 243, and 245 each coordinate Mg(2+). S102 carries the phosphoserine modification.

The protein belongs to the phosphohexose mutase family. It depends on Mg(2+) as a cofactor. Post-translationally, activated by phosphorylation.

It catalyses the reaction alpha-D-glucosamine 1-phosphate = D-glucosamine 6-phosphate. Catalyzes the conversion of glucosamine-6-phosphate to glucosamine-1-phosphate. This Legionella pneumophila (strain Corby) protein is Phosphoglucosamine mutase.